Here is an 83-residue protein sequence, read N- to C-terminus: Protein WFDC9 (83 aa).

The first 24 residues, 1 to 24 (MKPWIIVLTVSAHGILVFLHVLGS), serve as a signal peptide directing secretion.

The protein resides in the secreted. The polypeptide is Protein WFDC9 (Wfdc9) (Mus musculus (Mouse)).